Reading from the N-terminus, the 452-residue chain is Zinc finger protein GAI-ASSOCIATED FACTOR 1 (452 aa).

The span at 1–32 (MPVDLDNSSTVSGEASVSISSTGNQNPLPNST) shows a compositional bias: polar residues. The tract at residues 1-47 (MPVDLDNSSTVSGEASVSISSTGNQNPLPNSTGKKKRNLPGMPDPES) is disordered. Ser-53 carries the post-translational modification Phosphoserine. C2H2-type zinc fingers lie at residues 63–85 (FVCE…RRGH) and 104–134 (YVCP…CRKH). The short motif at 126 to 133 (IKKHFCRK) is the Nuclear localization signal element. The segment at 139 to 162 (WKCDKCSKKYAVQSDWKAHSKICG) adopts a C2H2-type 2; degenerate zinc-finger fold. Positions 141, 144, 157, 161, 168, 170, 183, and 187 each coordinate Zn(2+). The CCHC-type 2; atypical zinc finger occupies 166–189 (YKCDCGTLFSRRDSFITHRAFCDA). Residues 176 to 188 (RRDSFITHRAFCD) form an SHR-binding region. Residues 196-254 (RSHHSQSKKQNPEILTRKNPVPNPVPAPVDTESAKIKSSSTLTIKQSESPKTPPEIVQE) form a disordered region. Positions 231-245 (IKSSSTLTIKQSESP) are enriched in polar residues.

As to quaternary structure, interacts with the DELLA proteins (e.g. GAI/RGA2, RGA, RGL1, RGL2 and RGLG3), acting as coactivators and with TPR1 and TPR4, acting as a corepressors, at the promoter of GA20OX2 gene. Observed in vegetative tissues. Mainly expressed in hypocotyls, petioles, shoot apices, root tips, and trichomes, and, at low levels, in leaves, stems and flowers.

The protein localises to the nucleus. Transcription activation is repressed by gibberellic acid GA(3) in the presence of TPR4. In terms of biological role, transcription factor that acts as a positive regulator of gibberellin (GA) action, homeostasis and signaling. GA converts the GAF1 complex from transcriptional activator to repressor via the degradation of DELLA proteins. The sequence is that of Zinc finger protein GAI-ASSOCIATED FACTOR 1 from Arabidopsis thaliana (Mouse-ear cress).